The chain runs to 245 residues: 1-(5-phosphoribosyl)-5-[(5-phosphoribosylamino)methylideneamino] imidazole-4-carboxamide isomerase (245 aa).

D7 serves as the catalytic Proton acceptor. Catalysis depends on D129, which acts as the Proton donor.

It belongs to the HisA/HisF family.

It localises to the cytoplasm. The enzyme catalyses 1-(5-phospho-beta-D-ribosyl)-5-[(5-phospho-beta-D-ribosylamino)methylideneamino]imidazole-4-carboxamide = 5-[(5-phospho-1-deoxy-D-ribulos-1-ylimino)methylamino]-1-(5-phospho-beta-D-ribosyl)imidazole-4-carboxamide. It participates in amino-acid biosynthesis; L-histidine biosynthesis; L-histidine from 5-phospho-alpha-D-ribose 1-diphosphate: step 4/9. The chain is 1-(5-phosphoribosyl)-5-[(5-phosphoribosylamino)methylideneamino] imidazole-4-carboxamide isomerase from Shewanella putrefaciens (strain CN-32 / ATCC BAA-453).